The sequence spans 95 residues: uncharacterized protein (95 aa).

A signal peptide (or 21) is located at residues 1–24; the sequence is MKKLATLTALAGALTMAVATAAQA. Residues 55–89 show a composition bias toward basic and acidic residues; sequence EGKCGADKAKSAEGKCGEGKCGADKAKSAEGKCGE. The segment at 55 to 95 is disordered; the sequence is EGKCGADKAKSAEGKCGEGKCGADKAKSAEGKCGEGKCGSK.

This is an uncharacterized protein from Haemophilus influenzae (strain ATCC 51907 / DSM 11121 / KW20 / Rd).